The primary structure comprises 433 residues: Isocitrate dehydrogenase [NADP], chloroplastic (433 aa).

The transit peptide at 1-21 (QFSPNLSFSAFFPIITFTTAT) directs the protein to the chloroplast. Residues 98–100 (TIT) and R105 each bind NADP(+). A substrate-binding site is contributed by T100. Residues 117 to 123 (SPNGTIR), R132, and R155 each bind substrate. Residue D275 coordinates Mn(2+). Residue K283 participates in NADP(+) binding. D298 contributes to the Mn(2+) binding site. Residues 333-338 (GTVTRH) and N351 each bind NADP(+).

Belongs to the isocitrate and isopropylmalate dehydrogenases family. Mg(2+) is required as a cofactor. Mn(2+) serves as cofactor. Detected in all tissues examined.

It localises to the plastid. Its subcellular location is the chloroplast. The enzyme catalyses D-threo-isocitrate + NADP(+) = 2-oxoglutarate + CO2 + NADPH. This is Isocitrate dehydrogenase [NADP], chloroplastic from Medicago sativa (Alfalfa).